The following is a 376-amino-acid chain: DNA-directed RNA polymerase subunit alpha (376 aa).

Positions 1-259 (MSDCSQNLLY…KHFSIFEKMD (259 aa)) are alpha N-terminal domain (alpha-NTD). Residues 276 to 376 (KDDILHKLVL…DKIRSKNGKG (101 aa)) are alpha C-terminal domain (alpha-CTD).

It belongs to the RNA polymerase alpha chain family. As to quaternary structure, homodimer. The RNAP catalytic core consists of 2 alpha, 1 beta, 1 beta' and 1 omega subunit. When a sigma factor is associated with the core the holoenzyme is formed, which can initiate transcription.

It carries out the reaction RNA(n) + a ribonucleoside 5'-triphosphate = RNA(n+1) + diphosphate. In terms of biological role, DNA-dependent RNA polymerase catalyzes the transcription of DNA into RNA using the four ribonucleoside triphosphates as substrates. The protein is DNA-directed RNA polymerase subunit alpha of Chlamydia abortus (strain DSM 27085 / S26/3) (Chlamydophila abortus).